A 343-amino-acid polypeptide reads, in one-letter code: MIRLYPEQLRAQLNEGLRAAYLLLGNDPLLLQESQDAVRQVAAAQGFEEHHTFSIDPNTDWNAIFSLCQAMSLFASRQTLLLLLPENGPNAAINEQLLTLTGLLHDDLLLIVRGNKLSKAQENAAWFTALANRSVQVTCQTPEQAQLPRWVAARAKQLNLELDDAANQVLCYCYEGNLLALAQALERLSLLWPDGKLTLPRVEQAVNDAAHFTPFHWVDALLMGKSKRALHILQQLRLEGSEPVILLRTLQRELLLLVNLKRQSAHTPLRALFDKHRVWQNRRGMMGEALNRLSQTQLRQAVQLLTRTELTLKQDYGQSVWAELEGLSLLLCHKPLADVFIDG.

Domain stretches follow at residues 1–140 (MIRL…VTCQ), 141–210 (TPEQ…NDAA), and 211–343 (HFTP…FIDG).

The protein belongs to the DNA polymerase HolA subunit family. In terms of assembly, the DNA polymerase III holoenzyme complex contains at least 10 different subunits organized into 3 functionally essential subassemblies: the Pol III core, the beta sliding clamp processivity factor and the clamp-loading complex. The Pol III core (subunits alpha, epsilon and theta) contains the polymerase and the 3'-5' exonuclease proofreading activities. The polymerase is tethered to the template via the dimeric beta sliding clamp processivity factor. The clamp-loading complex (also called gamma complex) assembles the beta sliding clamp onto the primed template and plays a central role in the organization and communication at the replication fork. The clamp-loading complex contains delta, delta', psi and chi, and 3 copies of either or both of two different DnaX proteins, gamma and tau. The DNA replisome complex has a single clamp loader (3 tau and 1 each of delta, delta', psi and chi subunits) which binds 3 Pol III cores (1 core on the leading strand and 2 on the lagging strand) each with a beta sliding clamp dimer. Additional proteins in the replisome are other copies of gamma, psi and chi, Ssb, DNA helicase and RNA primase. The clamp loader hydrolyzes ATP to assemble the beta processivity factor onto the primed template and plays a central role in the organization and communication at the replication fork; the minimal complex to load the beta sliding clamp on DNA is delta, delta', gamma.

It carries out the reaction DNA(n) + a 2'-deoxyribonucleoside 5'-triphosphate = DNA(n+1) + diphosphate. Part of the beta sliding clamp loading complex, which hydrolyzes ATP to load the beta clamp onto primed DNA to form the DNA replication pre-initiation complex. DNA polymerase III is a complex, multichain enzyme responsible for most of the replicative synthesis in bacteria. This DNA polymerase also exhibits 3'-5' exonuclease activity. The delta subunit is the wrench that will open the beta subunit dimer, which has been modeled to leave a gap large enough for ssDNA to pass through. The gamma complex (gamma(3),delta,delta') is thought to load beta dimers onto DNA by binding ATP which alters the complex's conformation so it can bind beta sliding clamp dimers and open them at one interface. Primed DNA is recognized, ATP is hydrolyzed releasing the gamma complex and closing the beta sliding clamp ring around the primed DNA. This chain is DNA polymerase III subunit delta (holA), found in Escherichia coli (strain K12).